The chain runs to 366 residues: tRNA/tmRNA (uracil-C(5))-methyltransferase (366 aa).

S-adenosyl-L-methionine contacts are provided by Gln-190, Tyr-218, Asn-223, Glu-239, and Asp-299. The active-site Nucleophile is the Cys-324. The active-site Proton acceptor is the Glu-358.

The protein belongs to the class I-like SAM-binding methyltransferase superfamily. RNA M5U methyltransferase family. TrmA subfamily.

The enzyme catalyses uridine(54) in tRNA + S-adenosyl-L-methionine = 5-methyluridine(54) in tRNA + S-adenosyl-L-homocysteine + H(+). It carries out the reaction uridine(341) in tmRNA + S-adenosyl-L-methionine = 5-methyluridine(341) in tmRNA + S-adenosyl-L-homocysteine + H(+). In terms of biological role, dual-specificity methyltransferase that catalyzes the formation of 5-methyluridine at position 54 (m5U54) in all tRNAs, and that of position 341 (m5U341) in tmRNA (transfer-mRNA). This chain is tRNA/tmRNA (uracil-C(5))-methyltransferase, found in Escherichia coli O6:H1 (strain CFT073 / ATCC 700928 / UPEC).